We begin with the raw amino-acid sequence, 37 residues long: Large ribosomal subunit protein bL36 (37 aa).

The protein belongs to the bacterial ribosomal protein bL36 family.

The protein is Large ribosomal subunit protein bL36 of Polaromonas naphthalenivorans (strain CJ2).